The chain runs to 452 residues: Membrane-bound acylglycerophosphatidylinositol O-acyltransferase mboa-7 (452 aa).

4 consecutive transmembrane segments (helical) span residues 4–24 (IIGL…FSFA), 53–73 (PRIA…AFAP), 79–99 (FYVF…HYFL), and 104–124 (VASH…GITF). N-linked (GlcNAc...) asparagine glycosylation occurs at N137. Transmembrane regions (helical) follow at residues 153–173 (FAYF…YQML), 220–240 (AIWE…FVVF), and 244–264 (VYSA…GIYP). N319 is a glycosylation site (N-linked (GlcNAc...) asparagine). H350 is an active-site residue. A helical transmembrane segment spans residues 354–374 (AGYFMSFGVVAMCAILEDVIF). N-linked (GlcNAc...) asparagine glycosylation is present at N414. A helical membrane pass occupies residues 421-441 (FWSSIYYWLPLLCVPFYIYSV).

It belongs to the membrane-bound acyltransferase family.

The protein localises to the membrane. The enzyme catalyses a 1-acyl-sn-glycero-3-phospho-(1D-myo-inositol) + an acyl-CoA = a 1,2-diacyl-sn-glycero-3-phospho-(1D-myo-inositol) + CoA. It carries out the reaction a fatty acyl-[ACP] + a 1-acyl-sn-glycero-3-phosphate = a 1,2-diacyl-sn-glycero-3-phosphate + holo-[ACP]. It participates in lipid metabolism; phospholipid metabolism. Acyltransferase which mediates the conversion of lysophosphatidylinositol (1-acylglycerophosphatidylinositol or LPI) into phosphatidylinositol (1,2-diacyl-sn-glycero-3-phosphoinositol or PI) (LPIAT activity). Prefers arachidonoyl-CoA or eicosapentaenoic acid (EPA) as the acyl donor. Prefers sn-2-LPI rather than sn-1-LPI as the acyl acceptor. Lysophospholipid acyltransferases (LPLATs) catalyze the reacylation step of the phospholipid remodeling pathway also known as the Lands cycle. The protein is Membrane-bound acylglycerophosphatidylinositol O-acyltransferase mboa-7 of Caenorhabditis briggsae.